The chain runs to 541 residues: Cytochrome bc1 complex cytochrome b subunit (541 aa).

The helical transmembrane segment at 36–56 (FLLGEIALYSFIILILTGVYL) threads the bilayer. Residues H105 and H119 each contribute to the heme site. A run of 3 helical transmembrane segments spans residues 109–129 (ALMFVVSMMVHMMRIFFTGAF), 137–157 (WVIGVVLLILGIAEGFMGYSL), and 169–189 (IMSAIIVGLPIIGTWMHWMIF). Heme is bound by residues H206 and H221. The next 5 helical transmembrane spans lie at 207–227 (VLIIPGIILGLIAAHLALVWY), 256–276 (SVAFGAITLGFLSLLAGVTTI), 325–345 (VFWVAIMLGILVVLLIAYPWI), 371–391 (LGVMALIFYILLTISGGNDIW), and 408–428 (IGLIVFPAIGYFVTYRLCIGL).

It belongs to the cytochrome b family. As to quaternary structure, the cytochrome bc1 complex is composed of a cytochrome b (QcrB), the Rieske protein iron-sulfur (QcrA) and a diheme cytochrome c (QcrC) subunit. Heme is required as a cofactor.

The protein resides in the cell membrane. The catalysed reaction is a quinol + 2 Fe(III)-[cytochrome c](out) = a quinone + 2 Fe(II)-[cytochrome c](out) + 2 H(+)(out). Cytochrome b subunit of the cytochrome bc1 complex, an essential component of the respiratory electron transport chain required for ATP synthesis. The bc1 complex catalyzes the oxidation of menaquinol and the reduction of cytochrome c in the respiratory chain. The bc1 complex operates through a Q-cycle mechanism that couples electron transfer to generation of the proton gradient that drives ATP synthesis. The protein is Cytochrome bc1 complex cytochrome b subunit (qcrB) of Corynebacterium efficiens (strain DSM 44549 / YS-314 / AJ 12310 / JCM 11189 / NBRC 100395).